Reading from the N-terminus, the 166-residue chain is MEVILKRDFISLGYEGDICKVKDGYARNYLIPRNIAVVKNAANLRTLAQMQKSLEKKRAKRKMEAEILKGKIVDITVVIPMKVAENGKLYGSVSQQTIVDALKEKEIDINKRDVHMEKHIKELGDFEVEIKLYHSVNANIKIKVVNVDENAAAEEVKEENTAAVEA.

This sequence belongs to the bacterial ribosomal protein bL9 family.

In terms of biological role, binds to the 23S rRNA. This Brachyspira hyodysenteriae (strain ATCC 49526 / WA1) protein is Large ribosomal subunit protein bL9.